The following is a 353-amino-acid chain: Quinolinate synthase (353 aa).

2 residues coordinate iminosuccinate: His-47 and Ser-68. Residue Cys-113 coordinates [4Fe-4S] cluster. Residues 139-141 and Ser-156 contribute to the iminosuccinate site; that span reads YAN. Position 200 (Cys-200) interacts with [4Fe-4S] cluster. Iminosuccinate contacts are provided by residues 226-228 and Thr-243; that span reads HPE. Cys-297 is a [4Fe-4S] cluster binding site.

The protein belongs to the quinolinate synthase family. Type 1 subfamily. Requires [4Fe-4S] cluster as cofactor.

Its subcellular location is the cytoplasm. The catalysed reaction is iminosuccinate + dihydroxyacetone phosphate = quinolinate + phosphate + 2 H2O + H(+). It participates in cofactor biosynthesis; NAD(+) biosynthesis; quinolinate from iminoaspartate: step 1/1. In terms of biological role, catalyzes the condensation of iminoaspartate with dihydroxyacetone phosphate to form quinolinate. The protein is Quinolinate synthase of Erwinia tasmaniensis (strain DSM 17950 / CFBP 7177 / CIP 109463 / NCPPB 4357 / Et1/99).